Here is a 739-residue protein sequence, read N- to C-terminus: Polyribonucleotide nucleotidyltransferase (739 aa).

Mg(2+) contacts are provided by D489 and D495. One can recognise a KH domain in the interval 556–615; it reads PKIDTIKIDVDKIKIVIGKGGETIDKIIAETGVKIDIDEDGLVAIFSPDRAAIERTKEII. The region spanning 625–693 is the S1 motif domain; the sequence is DEVFQAKVVR…DKGRIDASMK (69 aa). Positions 699–739 are disordered; that stretch reads PEGYVEPEKRERSEKPRRHKEHKEKKDNNFGEFKFHKVDKK. A compositionally biased stretch (basic and acidic residues) spans 722-739; the sequence is EKKDNNFGEFKFHKVDKK.

The protein belongs to the polyribonucleotide nucleotidyltransferase family. It depends on Mg(2+) as a cofactor.

The protein resides in the cytoplasm. It catalyses the reaction RNA(n+1) + phosphate = RNA(n) + a ribonucleoside 5'-diphosphate. In terms of biological role, involved in mRNA degradation. Catalyzes the phosphorolysis of single-stranded polyribonucleotides processively in the 3'- to 5'-direction. The sequence is that of Polyribonucleotide nucleotidyltransferase from Streptococcus suis (strain 98HAH33).